We begin with the raw amino-acid sequence, 540 residues long: Glucose-6-phosphate isomerase (540 aa).

Catalysis depends on Glu350, which acts as the Proton donor. Active-site residues include His381 and Lys503.

It belongs to the GPI family.

It is found in the cytoplasm. It carries out the reaction alpha-D-glucose 6-phosphate = beta-D-fructose 6-phosphate. The protein operates within carbohydrate biosynthesis; gluconeogenesis. It participates in carbohydrate degradation; glycolysis; D-glyceraldehyde 3-phosphate and glycerone phosphate from D-glucose: step 2/4. Its function is as follows. Catalyzes the reversible isomerization of glucose-6-phosphate to fructose-6-phosphate. The chain is Glucose-6-phosphate isomerase from Paraburkholderia phymatum (strain DSM 17167 / CIP 108236 / LMG 21445 / STM815) (Burkholderia phymatum).